The chain runs to 85 residues: MKLVNIGFGNMVVSSRIVAIISPDSAPIKRFLSDAKTRNELIDATYGRKTRAVLVLDSGHIVLSALHPETIAARIEGGDKEEESY.

It belongs to the RemA family.

The protein is Putative regulatory protein DICTH_1339 of Dictyoglomus thermophilum (strain ATCC 35947 / DSM 3960 / H-6-12).